Consider the following 285-residue polypeptide: MNSLFVGRPIVKSSYNVYTLPSSICGGHFFKVSNSLSLYDDHRRTRIEIIRNSELIPKHVAIIMDGNRRWAKARGLPVQEGHKFLAPNLKNICNISSKLGIQVITAFAFSTENWNRSSEEVDFLMRLFEEFFEEFMRLGVRVSLIGGKSKLPTKLQQVIELTEEVTKSNEGLHLMMALNYGGQYDMLQATKNIASKVKDGLIKLEDIDYTLFEQELTTKCAKFPKPDLLIRTGGEQRISNFLLWQLAYSELYFTNTLFPDFGEEALMDAIFSFQRRHRRFGGHTY.

Residues 1–30 constitute a chloroplast transit peptide; it reads MNSLFVGRPIVKSSYNVYTLPSSICGGHFF. Residue D65 is part of the active site.

This sequence belongs to the UPP synthase family. The cofactor is Mg(2+). As to expression, expressed in roots and red fruits.

Its subcellular location is the plastid. The protein resides in the chloroplast. The enzyme catalyses 2 isopentenyl diphosphate + dimethylallyl diphosphate = (2Z,6Z)-farnesyl diphosphate + 2 diphosphate. It catalyses the reaction isopentenyl diphosphate + dimethylallyl diphosphate = neryl diphosphate + diphosphate. It carries out the reaction neryl diphosphate + isopentenyl diphosphate = (2Z,6Z)-farnesyl diphosphate + diphosphate. In terms of biological role, uses neryl diphosphate to catalyze the cis-prenyl chain elongation and produce the 15 carbon product (2Z,6Z)-farnesyl diphosphate. This chain is (2Z,6Z)-farnesyl diphosphate synthase CPT6, chloroplastic, found in Solanum lycopersicum (Tomato).